An 81-amino-acid polypeptide reads, in one-letter code: Photosystem I iron-sulfur center (81 aa).

4Fe-4S ferredoxin-type domains follow at residues 2–31 (SHSVKIYDTCIGCTQCVRACPLDVLEMVPW) and 37–68 (GQIASSPRTEDCIGCKRCETACPTDFLSVRVY). 8 residues coordinate [4Fe-4S] cluster: cysteine 11, cysteine 14, cysteine 17, cysteine 21, cysteine 48, cysteine 51, cysteine 54, and cysteine 58.

As to quaternary structure, the cyanobacterial PSI reaction center is composed of one copy each of PsaA,B,C,D,E,F,I,J,K,L,M and X, and forms trimeric complexes. Requires [4Fe-4S] cluster as cofactor.

Its subcellular location is the cellular thylakoid membrane. It catalyses the reaction reduced [plastocyanin] + hnu + oxidized [2Fe-2S]-[ferredoxin] = oxidized [plastocyanin] + reduced [2Fe-2S]-[ferredoxin]. Apoprotein for the two 4Fe-4S centers FA and FB of photosystem I (PSI); essential for photochemical activity. FB is the terminal electron acceptor of PSI, donating electrons to ferredoxin. The C-terminus interacts with PsaA/B/D and helps assemble the protein into the PSI complex. Required for binding of PsaD and PsaE to PSI. PSI is a plastocyanin/cytochrome c6-ferredoxin oxidoreductase, converting photonic excitation into a charge separation, which transfers an electron from the donor P700 chlorophyll pair to the spectroscopically characterized acceptors A0, A1, FX, FA and FB in turn. The sequence is that of Photosystem I iron-sulfur center from Trichodesmium erythraeum (strain IMS101).